A 509-amino-acid polypeptide reads, in one-letter code: ATP synthase subunit alpha, mitochondrial (509 aa).

171–178 (GDRQTGKT) is an ATP binding site.

It belongs to the ATPase alpha/beta chains family. In terms of assembly, F-type ATPases have 2 components, CF(1) - the catalytic core - and CF(0) - the membrane proton channel. CF(1) has five subunits: alpha(3), beta(3), gamma(1), delta(1), epsilon(1). CF(0) has three main subunits: a, b and c.

The protein resides in the mitochondrion. It localises to the mitochondrion inner membrane. Mitochondrial membrane ATP synthase (F(1)F(0) ATP synthase or Complex V) produces ATP from ADP in the presence of a proton gradient across the membrane which is generated by electron transport complexes of the respiratory chain. F-type ATPases consist of two structural domains, F(1) - containing the extramembraneous catalytic core, and F(0) - containing the membrane proton channel, linked together by a central stalk and a peripheral stalk. During catalysis, ATP synthesis in the catalytic domain of F(1) is coupled via a rotary mechanism of the central stalk subunits to proton translocation. Subunits alpha and beta form the catalytic core in F(1). Rotation of the central stalk against the surrounding alpha(3)beta(3) subunits leads to hydrolysis of ATP in three separate catalytic sites on the beta subunits. Subunit alpha does not bear the catalytic high-affinity ATP-binding sites. This is ATP synthase subunit alpha, mitochondrial (ATPA) from Oryza sativa subsp. indica (Rice).